The sequence spans 348 residues: Putative serine/threonine-protein phosphatase C26H8.05c (348 aa).

Mn(2+)-binding residues include Asp-53, His-55, Asp-81, and Asn-113. His-114 (proton donor) is an active-site residue. His-163 and His-237 together coordinate Mn(2+). Residues 259–282 (TNEEDSELDSDSASPVDDSPAPGD) are disordered. A compositionally biased stretch (low complexity) spans 269–280 (DSASPVDDSPAP). At Ser-272 the chain carries Phosphoserine. Leu-348 bears the Leucine methyl ester mark.

This sequence belongs to the PPP phosphatase family. PP-1 subfamily. It depends on Mn(2+) as a cofactor.

It localises to the cytoplasm. The protein resides in the nucleus. It catalyses the reaction O-phospho-L-seryl-[protein] + H2O = L-seryl-[protein] + phosphate. The enzyme catalyses O-phospho-L-threonyl-[protein] + H2O = L-threonyl-[protein] + phosphate. This is Putative serine/threonine-protein phosphatase C26H8.05c from Schizosaccharomyces pombe (strain 972 / ATCC 24843) (Fission yeast).